The following is a 182-amino-acid chain: Peptidyl-tRNA hydrolase (182 aa).

Tyr14 lines the tRNA pocket. His19 (proton acceptor) is an active-site residue. 3 residues coordinate tRNA: Phe60, Asn62, and Asn106.

Belongs to the PTH family. In terms of assembly, monomer.

It is found in the cytoplasm. The enzyme catalyses an N-acyl-L-alpha-aminoacyl-tRNA + H2O = an N-acyl-L-amino acid + a tRNA + H(+). Its function is as follows. Hydrolyzes ribosome-free peptidyl-tRNAs (with 1 or more amino acids incorporated), which drop off the ribosome during protein synthesis, or as a result of ribosome stalling. In terms of biological role, catalyzes the release of premature peptidyl moieties from peptidyl-tRNA molecules trapped in stalled 50S ribosomal subunits, and thus maintains levels of free tRNAs and 50S ribosomes. The polypeptide is Peptidyl-tRNA hydrolase (Campylobacter concisus (strain 13826)).